The sequence spans 814 residues: Echinoderm microtubule-associated protein-like 1 (814 aa).

Residues 31 to 72 adopt a coiled-coil conformation; the sequence is SMEISDRIASLEQRVQMQEDDIQLLKSALADVVRRLNITEEQ. A disordered region spans residues 77-185; the sequence is NRKGPTKARP…EPTFSPEEGY (109 aa). The segment covering 92–101 has biased composition (polar residues); sequence PLRTTVNNGT. Residues 103 to 115 show a composition bias toward low complexity; it reads LPKKPSASLPSPS. Position 113 is a phosphoserine (Ser113). Over residues 127 to 137 the composition is skewed to polar residues; sequence KSINRTSSSER. Residues 142–152 are compositionally biased toward basic and acidic residues; the sequence is GRRESSGDSKG. Over residues 155-167 the composition is skewed to low complexity; that stretch reads NRTGSTSSSSSGK. A tandem atypical propeller in EMLs region spans residues 175-814; the sequence is KEPTFSPEEG…DTSIMQWRVI (640 aa). 12 WD repeats span residues 260–309, 314–357, 362–399, 408–445, 449–488, 492–529, 534–571, 577–612, 616–654, 663–700, 708–767, and 774–813; these read EQLQ…IWDS, TLHV…VWDW, RLADVKCSNEAVFAADFHPTDTNIIVTCGKSHLYFWTL, QGLFEKQEKPKFVLCVTFSENGDTITGDSSGNILVWGK, RISYAVQGAHEGGIFALCMLRDGTLVSGGGKDRRLISWNG, KLHKAEIPEQFGPIRTVAEGKGNVILIGTTRNFVLQGT, FTPITQGHTDELWGLAIHASKPQFLTCGHDKHATLWDA, VWDKIIEDPAQSSGFHPSGSVVAVGTLTGRWFVFDT, DLVTVHTDGNEQLSVMRYSPDGNFLAIGSHDNCIYIYGV, RVGKCSGHSSFITHLDWSVNSQFLVSNSGDYEILYWVP, SVET…LFSY, and APSHIYSGHSSHVTNVDFLCEDSHLISTGGKDTSIMQWRV.

Belongs to the WD repeat EMAP family. In terms of assembly, homotrimer; self-association is mediated by the N-terminal coiled coil. Does not interact with EML3. Binds repolymerizing microtubules. Binds unpolymerized tubulins via its WD repeat region. Interacts with TASOR.

It localises to the cytoplasm. The protein resides in the perinuclear region. Its subcellular location is the cytoskeleton. Its function is as follows. Modulates the assembly and organization of the microtubule cytoskeleton, and probably plays a role in regulating the orientation of the mitotic spindle and the orientation of the plane of cell division. Required for normal proliferation of neuronal progenitor cells in the developing brain and for normal brain development. Does not affect neuron migration per se. The polypeptide is Echinoderm microtubule-associated protein-like 1 (Eml1) (Rattus norvegicus (Rat)).